The chain runs to 383 residues: Cytochrome b (383 aa).

4 helical membrane passes run 34–54, 78–99, 114–134, and 179–199; these read FGSL…FLMM, WLIR…FLHI, WNVG…GYVL, and FTAL…THLI. Residues histidine 84 and histidine 98 each contribute to the heme b site. Residues histidine 183 and histidine 197 each coordinate heme b. Histidine 202 lines the a ubiquinone pocket. The next 4 membrane-spanning stretches (helical) occupy residues 227–247, 289–309, 321–341, and 348–368; these read MKDV…ALYL, LGGV…PFLH, LSQL…WIGG, and YILL…ILMP.

Belongs to the cytochrome b family. The cytochrome bc1 complex contains 3 respiratory subunits (MT-CYB, CYC1 and UQCRFS1), 2 core proteins (UQCRC1 and UQCRC2) and probably 6 low-molecular weight proteins. Heme b serves as cofactor.

The protein resides in the mitochondrion inner membrane. In terms of biological role, component of the ubiquinol-cytochrome c reductase complex (complex III or cytochrome b-c1 complex) that is part of the mitochondrial respiratory chain. The b-c1 complex mediates electron transfer from ubiquinol to cytochrome c. Contributes to the generation of a proton gradient across the mitochondrial membrane that is then used for ATP synthesis. In Caiman crocodilus (Spectacled caiman), this protein is Cytochrome b (MT-CYB).